Consider the following 146-residue polypeptide: UPF0178 protein BC_3040 (146 aa).

The protein belongs to the UPF0178 family.

The sequence is that of UPF0178 protein BC_3040 from Bacillus cereus (strain ATCC 14579 / DSM 31 / CCUG 7414 / JCM 2152 / NBRC 15305 / NCIMB 9373 / NCTC 2599 / NRRL B-3711).